The sequence spans 201 residues: ATP-dependent Clp protease proteolytic subunit (201 aa).

The Nucleophile role is filled by Ser101. Residue His126 is part of the active site.

This sequence belongs to the peptidase S14 family. In terms of assembly, fourteen ClpP subunits assemble into 2 heptameric rings which stack back to back to give a disk-like structure with a central cavity, resembling the structure of eukaryotic proteasomes.

It is found in the cytoplasm. The enzyme catalyses Hydrolysis of proteins to small peptides in the presence of ATP and magnesium. alpha-casein is the usual test substrate. In the absence of ATP, only oligopeptides shorter than five residues are hydrolyzed (such as succinyl-Leu-Tyr-|-NHMec, and Leu-Tyr-Leu-|-Tyr-Trp, in which cleavage of the -Tyr-|-Leu- and -Tyr-|-Trp bonds also occurs).. Cleaves peptides in various proteins in a process that requires ATP hydrolysis. Has a chymotrypsin-like activity. Plays a major role in the degradation of misfolded proteins. This Francisella tularensis subsp. tularensis (strain FSC 198) protein is ATP-dependent Clp protease proteolytic subunit.